The sequence spans 235 residues: Thrombin-like enzyme bilineobin (235 aa).

Positions 1–227 (IIGGDECNIN…HLDWIQSIIA (227 aa)) constitute a Peptidase S1 domain. Cystine bridges form between Cys7–Cys141, Cys28–Cys44, Cys78–Cys234, Cys120–Cys188, Cys152–Cys167, and Cys178–Cys203. His43 acts as the Charge relay system in catalysis. Asn45, Asn57, and Asn81 each carry an N-linked (GlcNAc...) asparagine glycan. Asp88 acts as the Charge relay system in catalysis. 2 N-linked (GlcNAc...) asparagine glycosylation sites follow: Asn132 and Asn148. Residue Ser182 is the Charge relay system of the active site. A glycan (N-linked (GlcNAc...) asparagine) is linked at Asn229.

This sequence belongs to the peptidase S1 family. Snake venom subfamily. In terms of assembly, monomer. Post-translationally, glycosylated. Expressed by the venom gland.

Its subcellular location is the secreted. Its activity is regulated as follows. Not inhibited by hirudin. Thrombin-like snake venom serine protease that has coagulant activity by releasing fibrinopeptides A and B from fibrinogen alpha (FGA) and beta (FGB), with a preference for beta chain. The polypeptide is Thrombin-like enzyme bilineobin (Agkistrodon bilineatus (Cantil)).